The primary structure comprises 59 residues: Arabinogalactan protein 13 (59 aa).

Residues 1 to 27 (MEAMKMRLFVAVLVAAMAFSAVQQAAA) form the signal peptide. Residues Pro31, Pro33, and Pro35 each carry the 4-hydroxyproline modification. O-linked (Ara...) hydroxyproline glycosylation is found at Pro31, Pro33, and Pro35. A lipid anchor (GPI-anchor amidated serine) is attached at Ser37. A propeptide spans 38-59 (DASLAIPAFFASVATLAFGFLF) (removed in mature form).

Belongs to the AG-peptide AGP family. In terms of processing, contains 4-hydroxyproline; hydroxylated on Pro-31, Pro-33 and Pro-35. O-glycosylated on hydroxyprolines; noncontiguous hydroxylproline residues are glycosylated with arabinogalactan.

The protein localises to the cell membrane. In terms of biological role, proteoglycan that seems to be implicated in diverse developmental roles such as differentiation, cell-cell recognition, embryogenesis and programmed cell death. The chain is Arabinogalactan protein 13 from Arabidopsis thaliana (Mouse-ear cress).